We begin with the raw amino-acid sequence, 310 residues long: 300 kDa antigen AG231 (310 aa).

Residues 1-23 (VTGSCVVTGSCVVTDSCVVTGSC) are 4 X 6 AA tandem repeats of V-V-T-G-S-C. Positions 29-106 (VTTQESVTTQ…TQEPVTVEEH (78 aa)) are 13 X 6 AA tandem repeats of V-V-[TI]-[QE]-E-[PH]. Over residues 53 to 101 (VTIEEPVTTQEPVTIEEPVTTQEPVTTQEPVTTQEPVTTQEPVTTQEPV) the composition is skewed to low complexity. The tract at residues 53–310 (VTIEEPVTTQ…FGRGNKNDKK (258 aa)) is disordered. Composition is skewed to basic and acidic residues over residues 103-114 (VEEHIDEKKGSE) and 147-160 (NKNDKKSKNEKKPS). The 45 AA repeat 1 repeat unit spans residues 107–152 (IDEKKGSEGDNISLSSLSEETEEKSHTKKKKSSWLKFGRGNKNDKK). The span at 176-190 (TDSQISVNAQDSVTI) shows a compositional bias: polar residues. Residues 188 to 265 (VTIQEPTATQ…TQEPSTTQEH (78 aa)) form a 13 X 6 AA approximate tandem repeats region. Over residues 191–235 (QEPTATQEPPTTQELTATQEPTTTQETVTEQEPTTTQETVTAQEP) the composition is skewed to low complexity. The segment covering 236-263 (ITTQEPVTAQEPVTTQELIATQEPSTTQ) has biased composition (polar residues). The span at 264–273 (EHADEKKASE) shows a compositional bias: basic and acidic residues. Residues 266 to 310 (ADEKKASEGDNISLSRLSEETEEKSHTKKKSSWLKFGRGNKNDKK) form a 45 AA repeat 2 repeat.

This chain is 300 kDa antigen AG231 (FIRA), found in Plasmodium falciparum (isolate FC27 / Papua New Guinea).